The following is a 188-amino-acid chain: Preprocaerulein type-1 (188 aa).

Residues 1–26 form the signal peptide; it reads MFKGILLCVLFAVLSANPLSQPEGFA. Residues 27 to 170 constitute a propeptide that is removed on maturation; it reads DEERDVRGLA…ANDERRFADG (144 aa). Residues 152 to 188 are disordered; that stretch reads LGGSPQQREANDERRFADGQQDYTGWMDFGRRNGEDD. Tyr-174 is subject to Sulfotyrosine. At Phe-180 the chain carries Phenylalanine amide. Residues 184-188 constitute a propeptide that is removed on maturation; that stretch reads NGEDD.

The protein belongs to the gastrin/cholecystokinin family. Expressed by the skin glands.

Its subcellular location is the secreted. Functionally, the pharmacological activities of caerulein are quite similar to the physiological activities of gastrin and related peptides. This chain is Preprocaerulein type-1, found in Xenopus laevis (African clawed frog).